The primary structure comprises 531 residues: 2,3-bisphosphoglycerate-independent phosphoglycerate mutase (531 aa).

Mn(2+) is bound by residues Asp-15 and Ser-65. Ser-65 functions as the Phosphoserine intermediate in the catalytic mechanism. Residues His-126, 155–156 (RD), Arg-187, Arg-193, 257–260 (RPDR), and Lys-330 contribute to the substrate site. Residues Asp-397, His-401, Asp-438, His-439, and His-456 each contribute to the Mn(2+) site.

It belongs to the BPG-independent phosphoglycerate mutase family. Monomer. The cofactor is Mn(2+).

It catalyses the reaction (2R)-2-phosphoglycerate = (2R)-3-phosphoglycerate. It participates in carbohydrate degradation; glycolysis; pyruvate from D-glyceraldehyde 3-phosphate: step 3/5. Functionally, catalyzes the interconversion of 2-phosphoglycerate and 3-phosphoglycerate. This is 2,3-bisphosphoglycerate-independent phosphoglycerate mutase from Thermosynechococcus vestitus (strain NIES-2133 / IAM M-273 / BP-1).